Consider the following 159-residue polypeptide: Ethylene-responsive transcription factor ERF069 (159 aa).

Disordered regions lie at residues 1–36 (MKRI…KKLV) and 128–159 (DAPT…EEVV). The AP2/ERF DNA-binding region spans 74 to 134 (KFRGVRQRPW…IGPDAPTNFG (61 aa)). Basic and acidic residues predominate over residues 136-148 (PDVDSAVVKKQDS).

The protein belongs to the AP2/ERF transcription factor family. ERF subfamily.

Its subcellular location is the nucleus. Functionally, probably acts as a transcriptional activator. Binds to the GCC-box pathogenesis-related promoter element. May be involved in the regulation of gene expression by stress factors and by components of stress signal transduction pathways. The protein is Ethylene-responsive transcription factor ERF069 (ERF069) of Arabidopsis thaliana (Mouse-ear cress).